A 150-amino-acid chain; its full sequence is Catabolic 3-dehydroquinase 2 (150 aa).

Tyr23 acts as the Proton acceptor in catalysis. Residues Asn74, His80, and Asp87 each contribute to the substrate site. The Proton donor role is filled by His100. Substrate-binding positions include 101–102 (IT) and Arg111.

This sequence belongs to the type-II 3-dehydroquinase family. As to quaternary structure, homododecamer. Adopts a ring-like structure, composed of an arrangement of two hexameric rings stacked on top of one another.

It catalyses the reaction 3-dehydroquinate = 3-dehydroshikimate + H2O. The protein operates within aromatic compound metabolism; 3,4-dihydroxybenzoate biosynthesis; 3,4-dihydroxybenzoate from 3-dehydroquinate: step 1/2. Is involved in the catabolism of quinate. Allows the utilization of quinate as carbon source via the beta-ketoadipate pathway. The polypeptide is Catabolic 3-dehydroquinase 2 (Aspergillus flavus (strain ATCC 200026 / FGSC A1120 / IAM 13836 / NRRL 3357 / JCM 12722 / SRRC 167)).